Here is a 487-residue protein sequence, read N- to C-terminus: MYTQRMFDMWSSVTSKLEAHANNLGQSNVQSPAGQNNSSGSIKAQIEIIPCKVCGDKSSGVHYGVITCEGCKGFFRRSQSSVVNYQCPRNKQCVVDRVNRNRCQYCRLQKCLKLGMSRDAVKFGRMSKKQREKVEDEVRFHRAQMRAQSDAAPDSSVYDTQTPSSSDQLHHNNYNSYSGGYSNNEVGYGSPYGYSASVTPQQTMQYDISADYVDSTTYEPRSTIIDPEFISHADGDINDVLIKTLAEAHANTNTKLEAVHDMFRKQPDVSRILYYKNLGQEELWLDCAEKLTQMIQNIIEFAKLIPGFMRLSQDDQILLLKTGSFELAIVRMSRLLDLSQNAVLYGDVMLPQEAFYTSDSEEMRLVSRIFQTAKSIAELKLTETELALYQSLVLLWPERNGVRGNTEIQRLFNLSMNAIRQELETNHAPLKGDVTVLDTLLNNIPNFRDISILHMESLSKFKLQHPNVVFPALYKELFSIDSQQDLT.

The segment at residues 48–123 (IIPCKVCGDK…LGMSRDAVKF (76 aa)) is a DNA-binding region (nuclear receptor). 2 consecutive NR C4-type zinc fingers follow at residues 51 to 71 (CKVC…CEGC) and 87 to 111 (CPRN…LQKC). A disordered region spans residues 145–176 (MRAQSDAAPDSSVYDTQTPSSSDQLHHNNYNS). Residues 157–167 (VYDTQTPSSSD) are compositionally biased toward polar residues. The 244-residue stretch at 237–480 (INDVLIKTLA…PALYKELFSI (244 aa)) folds into the NR LBD domain.

This sequence belongs to the nuclear hormone receptor family. NR1 subfamily.

The protein localises to the nucleus. Its function is as follows. Putative receptor whose ligand is not yet known. The chain is Probable nuclear hormone receptor HR3 from Drosophila melanogaster (Fruit fly).